The sequence spans 455 residues: MFS-type transporter SLC18B1 (455 aa).

N-acetylmethionine is present on Met1. Residues 1–26 (MDTAGPPAPAGTEGDGPGGSTGETSR) form a disordered region. Residues 1–32 (MDTAGPPAPAGTEGDGPGGSTGETSRRLSKEQ) lie on the Cytoplasmic side of the membrane. Phosphoserine is present on Ser20. A helical membrane pass occupies residues 33-53 (IFVLVSAASMNLGCMMTYSIL). Residues 54–69 (GPFFPKEAEKKGASNT) lie on the Extracellular side of the membrane. Residues 70 to 90 (TIGMIFGCYALFELLASLVFG) form a helical membrane-spanning segment. Residues 91–99 (KYLVHIGAK) lie on the Cytoplasmic side of the membrane. The chain crosses the membrane as a helical span at residues 100–120 (FMFIAGMFVSGGVTILFGVLD). At 121-126 (QLPEGP) the chain is on the extracellular side. Residues 127-147 (IFIAMCFLVRIVDAIGFGAAI) form a helical membrane-spanning segment. Over 148 to 166 (TASSSILAKAFPNNVATVM) the chain is Cytoplasmic. The chain crosses the membrane as a helical span at residues 167 to 187 (GSLEVFSGLGLVAGPPLGGLL). Over 188–194 (YQSFGYE) the chain is Extracellular. Residues 195–215 (VPFIFLGCIVLLMIPLNLCIL) traverse the membrane as a helical segment. At 216–232 (PSYESDAGKQSFWKLVT) the chain is on the cytoplasmic side. The chain crosses the membrane as a helical span at residues 233 to 253 (LPKIGLIAFVIISLSSCFGFL). Residues 254–271 (DPTLSLFVMKKFSLSTGY) are Extracellular-facing. The chain crosses the membrane as a helical span at residues 272-292 (VGLVFLGLSLSYAISSPLFGL). At 293–303 (LSDKMPNLRKW) the chain is on the cytoplasmic side. Residues 304–324 (FLVFGNLITAGCYMLLGPIPL) traverse the membrane as a helical segment. Topologically, residues 325-330 (LHIKSQ) are extracellular. Residues 331-351 (LWLLVLVLVINGVSAGMSIIP) form a helical membrane-spanning segment. Residues 352–376 (TFPEMLSCAYANGFEDGISTLGLVS) are Cytoplasmic-facing. Residues 377–397 (GLFGAMWSVGAFMGPILGGFL) form a helical membrane-spanning segment. Residues 398–406 (CEKIGFEWA) are Extracellular-facing. The chain crosses the membrane as a helical span at residues 407 to 427 (AAIQGLWTLLSGVAMALFYLW). Over 428 to 455 (EDSTMRRSKAQNILGTEEEQAALLPNDT) the chain is Cytoplasmic.

As to expression, expressed in brain structures, particularly in hippocampus, cortex, and cerebellum (at protein level). Expressed in astrocytes and hippocampal neurons (at protein level). Expressed in peritoneal mast cells.

It localises to the cytoplasmic vesicle. The protein localises to the secretory vesicle membrane. It is found in the secretory vesicle. Its subcellular location is the synaptic vesicle membrane. It carries out the reaction spermine(in) + n H(+)(out) = spermine(out) + n H(+)(in). The catalysed reaction is spermidine(in) + n H(+)(out) = spermidine(out) + n H(+)(in). The enzyme catalyses serotonin(in) + n H(+)(out) = serotonin(out) + n H(+)(in). In terms of biological role, proton-coupled polyamine antiporter involved in the translocation of polyamines from cytosol into secretory vesicles prior to their release via exocytosis. Uses the electrochemical proton gradient generated by a V-type proton-pumping ATPase to couple the efflux of protons with the uptake of a polyamine molecule. Facilitates vesicular storage of spermine and spermidine in astrocytes with an impact on glutamatergic neuronal transmission and memory formation. Upon antigen stimulation, regulates polyamine accumulation and release in mast cell secretory granules, which in turn potentiates mast cell degranulation and histamine secretion. In Rattus norvegicus (Rat), this protein is MFS-type transporter SLC18B1.